The following is a 3164-amino-acid chain: ORFB polyprotein (3164 aa).

Residues 271 to 418 (MARAIGLSHA…IWNDPNILVG (148 aa)) form the Peptidase C8 domain. Active-site for papain-like protease p48 activity residues include C341 and H388. The next 6 helical transmembrane spans lie at 684–704 (LGFL…LLPF), 791–811 (IMIA…YVPY), 823–843 (YMLL…GYAC), 1166–1186 (AGLF…AAIM), 1215–1235 (FPIF…VSAY), and 1356–1376 (ALGF…LRPP). The segment at 1419–1445 (IEEKPSDAGRSEPIPDNDKQEESDYDQ) is disordered. An RNA-directed RNA polymerase region spans residues 1792–2207 (FYKSRKALKQ…AEDSADYRTW (416 aa)). The next 3 helical transmembrane spans lie at 2494-2514 (VRIY…MHWV), 2516-2536 (LFVQ…WSFW), and 2589-2609 (LGLV…EVLF). A Helicase ATP-binding domain is found at 2650–2795 (ATKAIEHGHV…IPFLEPTLPK (146 aa)). 2663 to 2670 (AKTASGKS) contacts ATP. The DEFH box motif lies at 2750–2753 (DEFH).

The protein in the C-terminal section; belongs to the DEAD box helicase family. Post-translationally, papain-like protease p48 is autocatalytically processed. The putative RNA-directed RNA polymerase/helicase is probably further processed.

It localises to the host membrane. It carries out the reaction RNA(n) + a ribonucleoside 5'-triphosphate = RNA(n+1) + diphosphate. The enzyme catalyses ATP + H2O = ADP + phosphate + H(+). Functionally, papain-like protease p48 is a cysteine protease of the peptidase family C8. The sequence is that of ORFB polyprotein from Cryphonectria parasitica (Chestnut blight fungus).